A 422-amino-acid polypeptide reads, in one-letter code: MDFLEIVGQVPLKGGVEISGAKNSALPILAATLLSQQEVKIKSLPQVVDIKAMALLLQNLGASLEWLDPNTLQISAKSLHHTEATYDLVRKMRASILVLGPLLARFKECLVSLPGGCAIGARPVDLHLKAMQQLGAEIKIEQGYIHAKAPKGLKGNDILFDKISVTGTENALMAASLAKGITRIINAAKEPEITQLCAFLQSGGVEIEGVGSSELKIRGVENDALNLKDIQIIPDRIEAGTYLCVGAITNSQLKINRIIPNHLQAITDKLIEIGFSLDIQENSIEIYPAQKRQAFEITTKEYPGFPTDMQAQFMALATQCLGTSVIEETLFENRFMHASELQRLGANISLKTNIATISGSTELTGSDVMATDLRASSALILAALVAKGVSRVHRIYHLDRGYERLEDKINALGAKVARLKEK.

Position 22-23 (22-23 (KN)) interacts with phosphoenolpyruvate. Position 93 (arginine 93) interacts with UDP-N-acetyl-alpha-D-glucosamine. Catalysis depends on cysteine 117, which acts as the Proton donor. At cysteine 117 the chain carries 2-(S-cysteinyl)pyruvic acid O-phosphothioketal. Residues 122–126 (RPVDL), aspartate 308, and leucine 330 contribute to the UDP-N-acetyl-alpha-D-glucosamine site.

The protein belongs to the EPSP synthase family. MurA subfamily.

It is found in the cytoplasm. The catalysed reaction is phosphoenolpyruvate + UDP-N-acetyl-alpha-D-glucosamine = UDP-N-acetyl-3-O-(1-carboxyvinyl)-alpha-D-glucosamine + phosphate. It participates in cell wall biogenesis; peptidoglycan biosynthesis. Its function is as follows. Cell wall formation. Adds enolpyruvyl to UDP-N-acetylglucosamine. The chain is UDP-N-acetylglucosamine 1-carboxyvinyltransferase from Helicobacter pylori (strain Shi470).